Here is a 1073-residue protein sequence, read N- to C-terminus: DNA-directed RNA polymerase subunit beta (1073 aa).

It belongs to the RNA polymerase beta chain family. In terms of assembly, in plastids the minimal PEP RNA polymerase catalytic core is composed of four subunits: alpha, beta, beta', and beta''. When a (nuclear-encoded) sigma factor is associated with the core the holoenzyme is formed, which can initiate transcription.

The protein localises to the plastid. The protein resides in the chloroplast. It carries out the reaction RNA(n) + a ribonucleoside 5'-triphosphate = RNA(n+1) + diphosphate. Its function is as follows. DNA-dependent RNA polymerase catalyzes the transcription of DNA into RNA using the four ribonucleoside triphosphates as substrates. This chain is DNA-directed RNA polymerase subunit beta, found in Aethionema grandiflorum (Persian stone-cress).